Consider the following 315-residue polypeptide: Taste receptor type 2 member 3 (315 aa).

Residues 1 to 5 are Extracellular-facing; sequence MGLTE. The helical transmembrane segment at 6–26 threads the bilayer; the sequence is GLFLILSGTQFALGILVNCFI. The Cytoplasmic segment spans residues 27–41; sequence GLVNGSSWFKTKRMS. The helical transmembrane segment at 42–62 threads the bilayer; it reads LSDFIITTLAFLRIILLCIIL. Over 63-93 the chain is Extracellular; the sequence is TDSFLIEFSPNAHDSGVIMQIIDVSWTFTNH. Residues 94 to 114 form a helical membrane-spanning segment; that stretch reads LSIWLATCLGVLYCLKIASFS. At 115–127 the chain is on the cytoplasmic side; that stretch reads HPTFLWLKWRVSR. Residues 128–148 form a helical membrane-spanning segment; it reads VMVWMLLGVLLLSCGSTASLI. The Extracellular portion of the chain corresponds to 149 to 185; that stretch reads NEFKLYSVFRGIEATXNVTEHFRKKRSEYYLIHVLGT. N165 is a glycosylation site (N-linked (GlcNAc...) asparagine). The chain crosses the membrane as a helical span at residues 186 to 206; sequence LWYLPPLIVSLAAYFLLIFSL. Topologically, residues 207–233 are cytoplasmic; it reads GRHTRQMLQNGTSSRDPSTEAHKRAIR. Residues 234–254 traverse the membrane as a helical segment; it reads IILSSFFLFLLYFLAFLIASF. The Extracellular portion of the chain corresponds to 255–265; it reads GNFLPKTKMAK. Residues 266–286 traverse the membrane as a helical segment; it reads MIGEVMTMFYPAGHSFILILG. Residues 287 to 315 lie on the Cytoplasmic side of the membrane; the sequence is NSKLKQTFVEMLRCESGHLKPGSKGPIFS.

The protein belongs to the G-protein coupled receptor T2R family.

It localises to the membrane. Gustducin-coupled receptor implicated in the perception of bitter compounds in the oral cavity and the gastrointestinal tract. Signals through PLCB2 and the calcium-regulated cation channel TRPM5. In Pongo pygmaeus (Bornean orangutan), this protein is Taste receptor type 2 member 3 (TAS2R3).